A 336-amino-acid chain; its full sequence is Serpentine receptor class delta-51 (336 aa).

7 consecutive transmembrane segments (helical) span residues 14-34, 48-68, 93-113, 133-153, 188-208, 237-257, and 275-295; these read VYYS…LFIM, YLFN…FAQC, CFVT…SILL, ATTF…QLLT, AAII…LIAF, GLLI…SYFL, and IFGS…VLPY.

Belongs to the nematode receptor-like protein srd family.

It is found in the membrane. This is Serpentine receptor class delta-51 (srd-51) from Caenorhabditis elegans.